A 408-amino-acid polypeptide reads, in one-letter code: Aminoacylase-1 (408 aa).

Zn(2+) is bound at residue His80. The active site involves Asp82. Residue Asp113 participates in Zn(2+) binding. Catalysis depends on Glu147, which acts as the Proton acceptor. Positions 148, 175, and 373 each coordinate Zn(2+).

Belongs to the peptidase M20A family. In terms of assembly, homodimer. Interacts with SPHK1. It depends on Zn(2+) as a cofactor. In terms of tissue distribution, expression is highest in kidney, strong in brain and weaker in placenta and spleen.

It is found in the cytoplasm. The catalysed reaction is an N-acyl-L-amino acid + H2O = an L-alpha-amino acid + a carboxylate. The enzyme catalyses N-acetyl-L-methionine + H2O = L-methionine + acetate. It carries out the reaction N-acetyl-L-glutamine + H2O = L-glutamine + acetate. Catalyzes the hydrolysis of N-acetylated amino acids to acetate and free amino acids. The polypeptide is Aminoacylase-1 (ACY1) (Homo sapiens (Human)).